The chain runs to 480 residues: Glutamyl-tRNA(Gln) amidotransferase subunit A (480 aa).

Residues K70 and S145 each act as charge relay system in the active site. S169 functions as the Acyl-ester intermediate in the catalytic mechanism.

This sequence belongs to the amidase family. GatA subfamily. As to quaternary structure, heterotrimer of A, B and C subunits.

The catalysed reaction is L-glutamyl-tRNA(Gln) + L-glutamine + ATP + H2O = L-glutaminyl-tRNA(Gln) + L-glutamate + ADP + phosphate + H(+). Its function is as follows. Allows the formation of correctly charged Gln-tRNA(Gln) through the transamidation of misacylated Glu-tRNA(Gln) in organisms which lack glutaminyl-tRNA synthetase. The reaction takes place in the presence of glutamine and ATP through an activated gamma-phospho-Glu-tRNA(Gln). The protein is Glutamyl-tRNA(Gln) amidotransferase subunit A of Lactobacillus delbrueckii subsp. bulgaricus (strain ATCC 11842 / DSM 20081 / BCRC 10696 / JCM 1002 / NBRC 13953 / NCIMB 11778 / NCTC 12712 / WDCM 00102 / Lb 14).